The chain runs to 470 residues: Pyruvate kinase I (470 aa).

Arginine 32 provides a ligand contact to substrate. K(+)-binding residues include asparagine 34, serine 36, aspartate 66, and threonine 67. An ATP-binding site is contributed by 34–37 (NFSH). An ATP-binding site is contributed by arginine 73. At lysine 76 the chain carries N6-acetyllysine. Position 156 (lysine 156) interacts with ATP. Glutamate 222 serves as a coordination point for Mg(2+). 3 residues coordinate substrate: glycine 245, aspartate 246, and threonine 278. Aspartate 246 is a binding site for Mg(2+). Lysine 319 is modified (N6-acetyllysine).

Belongs to the pyruvate kinase family. Homotetramer. The cofactor is Mg(2+). K(+) is required as a cofactor.

It catalyses the reaction pyruvate + ATP = phosphoenolpyruvate + ADP + H(+). It functions in the pathway carbohydrate degradation; glycolysis; pyruvate from D-glyceraldehyde 3-phosphate: step 5/5. This is Pyruvate kinase I (pykF) from Escherichia coli O157:H7.